The primary structure comprises 390 residues: Period circadian protein (390 aa).

Disordered stretches follow at residues 27 to 120, 164 to 188, 247 to 266, and 327 to 356; these read VTAP…APPV, LEYS…WEGE, GGNG…STNQ, and SPSG…TSQA. Residues 93–114 are compositionally biased toward gly residues; that stretch reads GTSGTGNSGDGGGGGGADGTGS. Over residues 247-256 the composition is skewed to gly residues; that stretch reads GGNGNVGSGN.

In terms of assembly, forms a heterodimer with timeless (TIM); the complex then translocates into the nucleus. Post-translationally, phosphorylated with a circadian rhythmicity, probably by the double-time protein (dbt). Phosphorylation could be implicated in the stability of per monomer and in the formation of heterodimer per-tim.

Its subcellular location is the nucleus. It is found in the cytoplasm. It localises to the perinuclear region. Essential for biological clock functions. Determines the period length of circadian and ultradian rhythms; an increase in PER dosage leads to shortened circadian rhythms and a decrease leads to lengthened circadian rhythms. Essential for the circadian rhythmicity of locomotor activity, eclosion behavior, and for the rhythmic component of the male courtship song that originates in the thoracic nervous system. The biological cycle depends on the rhythmic formation and nuclear localization of the TIM-PER complex. Light induces the degradation of TIM, which promotes elimination of PER. Nuclear activity of the heterodimer coordinatively regulates PER and TIM transcription through a negative feedback loop. Behaves as a negative element in circadian transcriptional loop. Does not appear to bind DNA, suggesting indirect transcriptional inhibition. The polypeptide is Period circadian protein (per) (Drosophila tropicalis (Fruit fly)).